Consider the following 243-residue polypeptide: Tryptophan synthase alpha chain (243 aa).

Residues glutamate 31 and aspartate 42 each act as proton acceptor in the active site.

This sequence belongs to the TrpA family. Tetramer of two alpha and two beta chains.

It carries out the reaction (1S,2R)-1-C-(indol-3-yl)glycerol 3-phosphate + L-serine = D-glyceraldehyde 3-phosphate + L-tryptophan + H2O. The protein operates within amino-acid biosynthesis; L-tryptophan biosynthesis; L-tryptophan from chorismate: step 5/5. Its function is as follows. The alpha subunit is responsible for the aldol cleavage of indoleglycerol phosphate to indole and glyceraldehyde 3-phosphate. This is Tryptophan synthase alpha chain from Staphylococcus epidermidis (strain ATCC 35984 / DSM 28319 / BCRC 17069 / CCUG 31568 / BM 3577 / RP62A).